A 130-amino-acid chain; its full sequence is Small ribosomal subunit protein uS8 (130 aa).

This sequence belongs to the universal ribosomal protein uS8 family. Part of the 30S ribosomal subunit. Contacts proteins S5 and S12.

Its function is as follows. One of the primary rRNA binding proteins, it binds directly to 16S rRNA central domain where it helps coordinate assembly of the platform of the 30S subunit. This is Small ribosomal subunit protein uS8 from Yersinia enterocolitica serotype O:8 / biotype 1B (strain NCTC 13174 / 8081).